Consider the following 180-residue polypeptide: MFPMVTGFMSYGQQTIRATRYIGQSFITTLSHTNRLPITIHYPYEKSITPERFRGRIHFEFDKCIACEVCVRVCPIDLPVVDWRFEKDIKRKQLLNYSIDFGVCIFCGNCVEYCPTSCLSMTEEYELSTYDRHELNYNQIALSRLPISIMGDYTIQTIRNSSESKINEEKSSNSRTITDY.

4Fe-4S ferredoxin-type domains are found at residues 55–84 (GRIH…VDWR) and 95–124 (LNYS…MTEE). Positions 64, 67, 70, 74, 104, 107, 110, and 114 each coordinate [4Fe-4S] cluster.

It belongs to the complex I 23 kDa subunit family. As to quaternary structure, NDH is composed of at least 16 different subunits, 5 of which are encoded in the nucleus. [4Fe-4S] cluster serves as cofactor.

It is found in the plastid. It localises to the chloroplast thylakoid membrane. It carries out the reaction a plastoquinone + NADH + (n+1) H(+)(in) = a plastoquinol + NAD(+) + n H(+)(out). The enzyme catalyses a plastoquinone + NADPH + (n+1) H(+)(in) = a plastoquinol + NADP(+) + n H(+)(out). In terms of biological role, NDH shuttles electrons from NAD(P)H:plastoquinone, via FMN and iron-sulfur (Fe-S) centers, to quinones in the photosynthetic chain and possibly in a chloroplast respiratory chain. The immediate electron acceptor for the enzyme in this species is believed to be plastoquinone. Couples the redox reaction to proton translocation, and thus conserves the redox energy in a proton gradient. The chain is NAD(P)H-quinone oxidoreductase subunit I, chloroplastic from Hordeum vulgare (Barley).